Consider the following 415-residue polypeptide: Protein-lysine N-trimethyltransferase SMYD5 (415 aa).

The 332-residue stretch at 20–351 (NCVDVRFINN…PGEEICISYL (332 aa)) folds into the SET domain. Residues 95–135 (PHPELCKVRPDRHQACPQCQVMYCSSECRQAAMDQYHKILC) form an MYND-type zinc finger. Residue Y350 participates in S-adenosyl-L-methionine binding. The tract at residues 388-415 (DMTSEDEEEVEGEGETEGEDMEDEMTDV) is disordered.

This sequence belongs to the class V-like SAM-binding methyltransferase superfamily. Expressed at high levels in the ovary and at lower levels in the fin, testis and brain.

Its subcellular location is the cytoplasm. The enzyme catalyses L-lysyl-[protein] + 3 S-adenosyl-L-methionine = N(6),N(6),N(6)-trimethyl-L-lysyl-[protein] + 3 S-adenosyl-L-homocysteine + 3 H(+). The catalysed reaction is L-lysyl(20)-[histone H4] + 3 S-adenosyl-L-methionine = N(6),N(6),N(6)-trimethyl-L-lysyl(20)-[histone H4] + 3 S-adenosyl-L-homocysteine + 3 H(+). It carries out the reaction L-lysyl(36)-[histone H3] + 3 S-adenosyl-L-methionine = N(6),N(6),N(6)-trimethyl-L-lysyl(36)-[histone H3] + 3 S-adenosyl-L-homocysteine + 3 H(+). Functionally, protein-lysine N-trimethyltransferase that specifically catalyzes trimethylation of 'Lys-22' of the RPL40/eL40 subunit of the 60S ribosome, thereby promoting translation elongation and protein synthesis. May also act as a histone methyltransferase in the context of histone octamers, but not on nucleosome substrates: trimethylates 'Lys-36' of histone H3 and 'Lys-20' of histone H4 to form H3K36me3 and H4K20me3, respectively. The histone methyltransferase activity, which is independent of its SET domain, is however unsure in vivo. Plays a crucial role in hematopoiesis during embryogenesis by negatively regulating expression of genes related to both primitive and definitive hematopoiesis. The sequence is that of Protein-lysine N-trimethyltransferase SMYD5 from Danio rerio (Zebrafish).